The chain runs to 147 residues: Cyanate hydratase (147 aa).

Catalysis depends on residues arginine 88, glutamate 91, and serine 114.

The protein belongs to the cyanase family.

The enzyme catalyses cyanate + hydrogencarbonate + 3 H(+) = NH4(+) + 2 CO2. In terms of biological role, catalyzes the reaction of cyanate with bicarbonate to produce ammonia and carbon dioxide. In Dechloromonas aromatica (strain RCB), this protein is Cyanate hydratase.